Consider the following 177-residue polypeptide: Acetyltransferase (177 aa).

The region spanning A4–G174 is the N-acetyltransferase domain. Acetyl-CoA contacts are provided by residues E27, L96–V98, G104–R109, D130–T131, and Y141.

Its function is as follows. Renders tabtoxin-producing pathogens tolerant to their own phytotoxins. This Pseudomonas amygdali pv. tabaci (Pseudomonas syringae pv. tabaci) protein is Acetyltransferase (ttr).